The sequence spans 20 residues: 35 kDa cell wall protein (20 aa).

The protein localises to the secreted. Its subcellular location is the cell wall. The chain is 35 kDa cell wall protein from Phaseolus vulgaris (Kidney bean).